The following is a 156-amino-acid chain: Endoribonuclease YbeY (156 aa).

Zn(2+) is bound by residues His117, His121, and His127.

This sequence belongs to the endoribonuclease YbeY family. Zn(2+) is required as a cofactor.

The protein resides in the cytoplasm. Functionally, single strand-specific metallo-endoribonuclease involved in late-stage 70S ribosome quality control and in maturation of the 3' terminus of the 16S rRNA. The protein is Endoribonuclease YbeY of Shewanella piezotolerans (strain WP3 / JCM 13877).